We begin with the raw amino-acid sequence, 245 residues long: Flagellar basal-body rod protein FlgF (245 aa).

The protein belongs to the flagella basal body rod proteins family. In terms of assembly, the basal body constitutes a major portion of the flagellar organelle and consists of five rings (E,L,P,S, and M) mounted on a central rod. The rod consists of about 26 subunits of FlgG in the distal portion, and FlgB, FlgC and FlgF are thought to build up the proximal portion of the rod with about 6 subunits each.

The protein localises to the bacterial flagellum basal body. This chain is Flagellar basal-body rod protein FlgF (flgF), found in Caulobacter vibrioides (strain ATCC 19089 / CIP 103742 / CB 15) (Caulobacter crescentus).